The chain runs to 466 residues: Muscarinic acetylcholine receptor M2 (466 aa).

At Met1–Glu22 the chain is on the extracellular side. N-linked (GlcNAc...) asparagine glycosylation is found at Asn2, Asn3, and Asn6. A helical transmembrane segment spans residues Val23–Met45. The Cytoplasmic segment spans residues Val46 to Asn59. The chain crosses the membrane as a helical span at residues Tyr60–Tyr80. The Extracellular portion of the chain corresponds to Thr81–Asp97. Cys96 and Cys176 are joined by a disulfide. The helical transmembrane segment at Leu98–Phe119 threads the bilayer. The Important for signaling signature appears at Asp120–Tyr122. At Asp120–Met139 the chain is on the cytoplasmic side. The chain crosses the membrane as a helical span at residues Ala140–Trp162. The Extracellular segment spans residues Gln163–Ala184. Residues Ala185–Ile209 form a helical membrane-spanning segment. Topologically, residues Ser210–Arg387 are cytoplasmic. Positions Lys218 to Ser320 are disordered. The residue at position 232 (Ser232) is a Phosphoserine. Over residues Gly254–Gly270 the composition is skewed to basic and acidic residues. Polar residues-rich tracts occupy residues Asn284–Ala293 and Asp304–Gly313. Residues Thr388–Asn410 traverse the membrane as a helical segment. The Extracellular segment spans residues Thr411–Pro418. A disulfide bridge connects residues Cys413 and Cys416. Residues Asn419–Leu442 form a helical membrane-spanning segment. Residues Asn436–Tyr440 carry the Important for signaling motif. Over Cys443–Arg466 the chain is Cytoplasmic. A phosphothreonine mark is found at Thr446, Thr450, and Thr465.

This sequence belongs to the G-protein coupled receptor 1 family. Muscarinic acetylcholine receptor subfamily. CHRM2 sub-subfamily. Interacts with ARRB1 and ARRB2. Interacts with RACK1; the interaction regulates CHRM2 internalization. Phosphorylated in response to agonist treatment.

It is found in the cell membrane. The protein localises to the postsynaptic cell membrane. Functionally, the muscarinic acetylcholine receptor mediates various cellular responses, including inhibition of adenylate cyclase, breakdown of phosphoinositides and modulation of potassium channels through the action of G proteins. Primary transducing effect is adenylate cyclase inhibition. Signaling promotes phospholipase C activity, leading to the release of inositol trisphosphate (IP3); this then triggers calcium ion release into the cytosol. The chain is Muscarinic acetylcholine receptor M2 (Chrm2) from Mus musculus (Mouse).